A 217-amino-acid polypeptide reads, in one-letter code: Thiopurine S-methyltransferase (217 aa).

4 residues coordinate S-adenosyl-L-methionine: tryptophan 10, leucine 45, glutamate 66, and arginine 123.

This sequence belongs to the class I-like SAM-binding methyltransferase superfamily. TPMT family.

Its subcellular location is the cytoplasm. The enzyme catalyses S-adenosyl-L-methionine + a thiopurine = S-adenosyl-L-homocysteine + a thiopurine S-methylether.. This Pseudomonas fluorescens (strain Pf0-1) protein is Thiopurine S-methyltransferase.